The following is a 450-amino-acid chain: Glucose-6-phosphate isomerase (450 aa).

E291 acts as the Proton donor in catalysis. Residues H312 and K426 contribute to the active site.

Belongs to the GPI family.

Its subcellular location is the cytoplasm. It catalyses the reaction alpha-D-glucose 6-phosphate = beta-D-fructose 6-phosphate. It functions in the pathway carbohydrate biosynthesis; gluconeogenesis. The protein operates within carbohydrate degradation; glycolysis; D-glyceraldehyde 3-phosphate and glycerone phosphate from D-glucose: step 2/4. Catalyzes the reversible isomerization of glucose-6-phosphate to fructose-6-phosphate. This chain is Glucose-6-phosphate isomerase, found in Clostridium novyi (strain NT).